A 499-amino-acid chain; its full sequence is Pentatricopeptide repeat-containing protein PPR5, chloroplastic (499 aa).

Low complexity predominate over residues 1 to 12; sequence MLACPSTSSPWP. Positions 1–28 are disordered; that stretch reads MLACPSTSSPWPQRQPPSPCPGGGGGAT. A chloroplast-targeting transit peptide spans 1–45; sequence MLACPSTSSPWPQRQPPSPCPGGGGGATRHVALAARSKRRGAGPA. PPR repeat units follow at residues 123 to 157, 158 to 193, 198 to 232, 233 to 267, 268 to 302, 303 to 337, 338 to 372, 373 to 407, and 408 to 442; these read DNGI…GCKP, DTSV…KCIE, TIVT…VVSP, DVYT…QCRP, DVIT…KERP, THPT…GFKP, NYVT…QTKV, HLSS…CVVP, and NGST…GIVP. A disordered region spans residues 458–499; the sequence is DRKPRTSPGINSASKPSTDSAGDSETATSDKPEVSVWHVAAT. The span at 465-484 shows a compositional bias: polar residues; it reads PGINSASKPSTDSAGDSETA.

This sequence belongs to the PPR family. P subfamily.

Its subcellular location is the plastid. The protein localises to the chloroplast. Functionally, involved in the biogenesis of the plastid translation machinery by promoting the splicing of group II introns in chloroplasts. Stabilizes the chloroplast trnG pre-RNA by directly binding to a group II intron, where it protects an endonuclease-sensitive site and stimulates splicing. Binds specific sites within group II intron trnG pre-RNA. Binds with high affinity to the 5'-UTR of the chloroplastic petA mRNA. The sequence is that of Pentatricopeptide repeat-containing protein PPR5, chloroplastic from Zea mays (Maize).